Reading from the N-terminus, the 698-residue chain is Serine/alanine racemase (698 aa).

Residues 1 to 10 (MKNKGIDQFR) lie on the Cytoplasmic side of the membrane. A helical membrane pass occupies residues 11–31 (VIAAMMVVAIHCLPLHYLWPE). Residues 32–42 (GDILITLTIFR) lie on the Extracellular side of the membrane. The chain crosses the membrane as a helical span at residues 43 to 63 (VAVPFFFMISGYYVFAELAVA). The Cytoplasmic portion of the chain corresponds to 64-81 (NSYPSRQRVFNFIKKQLK). A helical membrane pass occupies residues 82-102 (VYLLATLMFLPLALYSQTIGF). The Extracellular segment spans residues 103 to 121 (DLPVGTLVQVLLVNGILYH). The helical transmembrane segment at 122–142 (LWYFPALITGSLLLTSLLIHV) threads the bilayer. Topologically, residues 143-147 (SFKKV) are cytoplasmic. The helical transmembrane segment at 148–168 (FWLAAGLYLIGLGGDSWFGLI) threads the bilayer. The Extracellular portion of the chain corresponds to 169-183 (QQTPIEPFYTAVFHL). The helical transmembrane segment at 184–204 (LDGTRNGIFFTPLFLCLGVLV) threads the bilayer. Topologically, residues 205–216 (RKQSEKRSLSKT) are cytoplasmic. Residues 217 to 237 (ALFFLISLIGLLIESAYLHGF) form a helical membrane-spanning segment. Residues 238–244 (SIPKHDS) are Extracellular-facing. A helical transmembrane segment spans residues 245–265 (MYLFLPVVLFFLFPLILRWHP). Topologically, residues 266 to 274 (HRTWKHPGQ) are cytoplasmic. Residues 275–295 (LSLWLYLLHPYTIAGTHFLSQ) form a helical membrane-spanning segment. Residues 296-301 (KISILQ) lie on the Extracellular side of the membrane. The chain crosses the membrane as a helical span at residues 302 to 322 (NNLINYLVVLILTIGFICLFL). Over 323–698 (RQKHSWFRHK…IGPRVSARIK (376 aa)) the chain is Cytoplasmic. Residues 332 to 698 (KQTTPVKRAV…IGPRVSARIK (367 aa)) form a racemase region. Lysine 371 serves as the catalytic Proton acceptor. Lysine 371 carries the N6-(pyridoxal phosphate)lysine modification. Residue arginine 465 participates in substrate binding. The active-site Proton acceptor is tyrosine 597. Methionine 646 is a binding site for substrate.

In the N-terminal section; belongs to the acyltransferase 3 family. It in the C-terminal section; belongs to the alanine racemase family. Homodimer. It depends on pyridoxal 5'-phosphate as a cofactor.

Its subcellular location is the cell membrane. The enzyme catalyses L-alanine = D-alanine. It carries out the reaction L-serine = D-serine. It functions in the pathway amino-acid biosynthesis; D-alanine biosynthesis; D-alanine from L-alanine: step 1/1. Its function is as follows. Catalyzes the interconversion of L-serine and D-serine, and L-alanine and D-alanine. L-alanine is racemized at a rate that is 14% of that of L-serine. Together with VanC/VanC1 and VanXYC, required for vancomycin resistance in E.gallinarum strain BM4174. The protein is Serine/alanine racemase of Enterococcus gallinarum.